Here is a 212-residue protein sequence, read N- to C-terminus: Imidazole glycerol phosphate synthase subunit HisH (212 aa).

The region spanning 2–212 is the Glutamine amidotransferase type-1 domain; it reads RVVVIDYNGG…ILGNFLRWTS (211 aa). The active-site Nucleophile is Cys85. Residues His192 and Glu194 contribute to the active site.

In terms of assembly, heterodimer of HisH and HisF.

The protein resides in the cytoplasm. It catalyses the reaction 5-[(5-phospho-1-deoxy-D-ribulos-1-ylimino)methylamino]-1-(5-phospho-beta-D-ribosyl)imidazole-4-carboxamide + L-glutamine = D-erythro-1-(imidazol-4-yl)glycerol 3-phosphate + 5-amino-1-(5-phospho-beta-D-ribosyl)imidazole-4-carboxamide + L-glutamate + H(+). It carries out the reaction L-glutamine + H2O = L-glutamate + NH4(+). The protein operates within amino-acid biosynthesis; L-histidine biosynthesis; L-histidine from 5-phospho-alpha-D-ribose 1-diphosphate: step 5/9. IGPS catalyzes the conversion of PRFAR and glutamine to IGP, AICAR and glutamate. The HisH subunit catalyzes the hydrolysis of glutamine to glutamate and ammonia as part of the synthesis of IGP and AICAR. The resulting ammonia molecule is channeled to the active site of HisF. This is Imidazole glycerol phosphate synthase subunit HisH from Gluconobacter oxydans (strain 621H) (Gluconobacter suboxydans).